A 362-amino-acid polypeptide reads, in one-letter code: Patr class I histocompatibility antigen, B-2 alpha chain (362 aa).

Positions 1–24 are cleaved as a signal peptide; that stretch reads MQVTAPRTVLLLLSAALALTETWA. The interval 25 to 114 is alpha-1; that stretch reads GSHSMKYFYT…LRGYYNQSEA (90 aa). At 25–308 the chain is on the extracellular side; it reads GSHSMKYFYT…EPSSQSTIPI (284 aa). A glycan (N-linked (GlcNAc...) asparagine) is linked at asparagine 110. The alpha-2 stretch occupies residues 115-206; that stretch reads GSHIIQRMYG…ENGKETLQRA (92 aa). Cystine bridges form between cysteine 125–cysteine 188 and cysteine 227–cysteine 283. Residues 207 to 298 form an alpha-3 region; sequence DPPKTHVTHH…GLPKPLTLRW (92 aa). Residues 209-295 form the Ig-like C1-type domain; the sequence is PKTHVTHHPI…QHEGLPKPLT (87 aa). Residues 299–308 form a connecting peptide region; that stretch reads EPSSQSTIPI. A helical transmembrane segment spans residues 309 to 332; the sequence is VGIVAGLAVLAVVVIGAVVAAVMC. Residues 333 to 362 lie on the Cytoplasmic side of the membrane; that stretch reads RRKSSGGKGGSYSQAASSDSAQGSDVSLTA. Positions 336 to 362 are disordered; that stretch reads SSGGKGGSYSQAASSDSAQGSDVSLTA. Over residues 343–362 the composition is skewed to low complexity; that stretch reads SYSQAASSDSAQGSDVSLTA.

This sequence belongs to the MHC class I family. In terms of assembly, heterodimer of an alpha chain and a beta chain (beta-2-microglobulin).

It localises to the membrane. In terms of biological role, involved in the presentation of foreign antigens to the immune system. The protein is Patr class I histocompatibility antigen, B-2 alpha chain of Pan troglodytes (Chimpanzee).